A 59-amino-acid polypeptide reads, in one-letter code: Large ribosomal subunit protein uL30 (59 aa).

It belongs to the universal ribosomal protein uL30 family. Part of the 50S ribosomal subunit.

This is Large ribosomal subunit protein uL30 from Aliivibrio fischeri (strain MJ11) (Vibrio fischeri).